Consider the following 30-residue polypeptide: Kalata-B17 (30 aa).

A cross-link (cyclopeptide (Gly-Asn)) is located at residues 1–30 (GIPCAESCVYIPCTITALLGCKCKDQVCYN). Disulfide bonds link C4–C21, C8–C23, and C13–C28.

Post-translationally, this is a cyclic peptide.

In terms of biological role, probably participates in a plant defense mechanism. This Oldenlandia affinis protein is Kalata-B17.